Consider the following 881-residue polypeptide: Leucine--tRNA ligase (881 aa).

The 'HIGH' region signature appears at 48–58 (PYPSGKLHMGH). A 'KMSKS' region motif is present at residues 638-642 (KMSKS). Residue Lys641 coordinates ATP.

It belongs to the class-I aminoacyl-tRNA synthetase family.

The protein localises to the cytoplasm. It catalyses the reaction tRNA(Leu) + L-leucine + ATP = L-leucyl-tRNA(Leu) + AMP + diphosphate. In Herminiimonas arsenicoxydans, this protein is Leucine--tRNA ligase.